The following is a 271-amino-acid chain: MTINNGTLQVPGANIHYQVRGSGPIILLVHGGGGDADKFHHVANHLANWYTVVTYDRRGHSRSNLANQIEGYRVETHSDDAHRLLAKITNKPAYVFGSSSGAVIGLDLCIRHPEQVHVMIPHEPILLQLLHGNELKQAEQFMEDLKKNHRSEVIKLMSRLETDEQSKAVLTKRLLGNSTYFTEYEIQGILSYTLDFEALKTVFTSSPMKILPAGGSASRELFPYRCANALAEQLETEWVEFPGNHTGYTMYHKEFSERLHDMLEKEKKHTC.

The AB hydrolase-1 domain maps to 24–124 (PIILLVHGGG…QVHVMIPHEP (101 aa)).

The protein belongs to the AB hydrolase superfamily.

This is an uncharacterized protein from Bacillus subtilis (strain 168).